The following is a 492-amino-acid chain: N-succinylglutamate 5-semialdehyde dehydrogenase (492 aa).

220–225 (GSANTG) contacts NAD(+). Catalysis depends on residues Glu-243 and Cys-277.

It belongs to the aldehyde dehydrogenase family. AstD subfamily.

It catalyses the reaction N-succinyl-L-glutamate 5-semialdehyde + NAD(+) + H2O = N-succinyl-L-glutamate + NADH + 2 H(+). It participates in amino-acid degradation; L-arginine degradation via AST pathway; L-glutamate and succinate from L-arginine: step 4/5. Functionally, catalyzes the NAD-dependent reduction of succinylglutamate semialdehyde into succinylglutamate. The polypeptide is N-succinylglutamate 5-semialdehyde dehydrogenase (Escherichia coli (strain 55989 / EAEC)).